Reading from the N-terminus, the 176-residue chain is Large ribosomal subunit protein uL10 (176 aa).

The protein belongs to the universal ribosomal protein uL10 family. Part of the ribosomal stalk of the 50S ribosomal subunit. The N-terminus interacts with L11 and the large rRNA to form the base of the stalk. The C-terminus forms an elongated spine to which L12 dimers bind in a sequential fashion forming a multimeric L10(L12)X complex.

Forms part of the ribosomal stalk, playing a central role in the interaction of the ribosome with GTP-bound translation factors. This Acaryochloris marina (strain MBIC 11017) protein is Large ribosomal subunit protein uL10.